Here is a 446-residue protein sequence, read N- to C-terminus: 3-phosphoshikimate 1-carboxyvinyltransferase (446 aa).

The tract at residues 1 to 20 (MSTWPAPSTATPVHATVTVP) is disordered. Residues Lys-23, Ser-24, and Arg-28 each coordinate 3-phosphoshikimate. Lys-23 lines the phosphoenolpyruvate pocket. Positions 100 and 128 each coordinate phosphoenolpyruvate. Positions 171, 172, 173, 200, 315, and 344 each coordinate 3-phosphoshikimate. Gln-173 lines the phosphoenolpyruvate pocket. The active-site Proton acceptor is Glu-315. Residues Arg-348, Arg-389, and Lys-414 each coordinate phosphoenolpyruvate.

The protein belongs to the EPSP synthase family. Monomer.

It is found in the cytoplasm. It carries out the reaction 3-phosphoshikimate + phosphoenolpyruvate = 5-O-(1-carboxyvinyl)-3-phosphoshikimate + phosphate. The protein operates within metabolic intermediate biosynthesis; chorismate biosynthesis; chorismate from D-erythrose 4-phosphate and phosphoenolpyruvate: step 6/7. Catalyzes the transfer of the enolpyruvyl moiety of phosphoenolpyruvate (PEP) to the 5-hydroxyl of shikimate-3-phosphate (S3P) to produce enolpyruvyl shikimate-3-phosphate and inorganic phosphate. This Mycolicibacterium vanbaalenii (strain DSM 7251 / JCM 13017 / BCRC 16820 / KCTC 9966 / NRRL B-24157 / PYR-1) (Mycobacterium vanbaalenii) protein is 3-phosphoshikimate 1-carboxyvinyltransferase.